The sequence spans 3933 residues: Protein DOP1 homolog PFC0245c (3933 aa).

The next 4 helical transmembrane spans lie at 70–90, 98–118, 140–160, and 163–183; these read LNPL…SSIF, FINN…HCTI, IFAY…NNIL, and IYSI…WLLL. 3 disordered regions span residues 468–494, 543–600, and 614–656; these read RLNN…KYQG, ININ…NMLH, and KKIN…SSSS. The segment covering 470 to 486 has biased composition (low complexity); that stretch reads NNNNNNNNNNNNNNNNN. The span at 546–561 shows a compositional bias: acidic residues; that stretch reads NDDDNLNYDDNEDDEY. Composition is skewed to low complexity over residues 563-576 and 585-597; these read NYHN…NYFN and ENNN…NNNN. Residues 620–651 adopt a coiled-coil conformation; sequence GQTNNYDDDEEEEDEEEEDNNNNTSYNNNNNN. A compositionally biased stretch (acidic residues) spans 625 to 639; the sequence is YDDDEEEEDEEEEDN. Residues 640-656 show a composition bias toward low complexity; the sequence is NNNTSYNNNNNNSSSSS. The next 3 membrane-spanning stretches (helical) occupy residues 782-802, 842-862, and 1186-1206; these read MLNL…YTFY, YLYI…MNFL, and FYFW…KSLL. Residues 1216 to 1255 show a composition bias toward acidic residues; sequence DDTDDDDDDDDDDDDEEEDDDDEDDDDEDDEEEDDEEDLG. Disordered stretches follow at residues 1216-1284 and 1361-1405; these read DDTD…MNKK and TNNN…NNFN. Positions 1263 to 1284 are enriched in basic residues; the sequence is SSKKGKKKKKKSVHKNKLMNKK. The stretch at 1349–1403 forms a coiled coil; sequence ELNKMKYMNEDITNNNNNINNNSNNNNNNKNNINNNNNNNNNNNNNNNNLNNLNN. Low complexity predominate over residues 1362 to 1405; it reads NNNNNINNNSNNNNNNKNNINNNNNNNNNNNNNNNNLNNLNNFN. 2 consecutive transmembrane segments (helical) span residues 1462–1482 and 1997–2017; these read FIKL…MFCL and KNIF…KLIY. The interval 2691–2739 is disordered; the sequence is HRRKMNRQNIRTDSSNNNNNNNINSNNNNNNNNNNNNNNNNNNNNNIYN. Low complexity predominate over residues 2704–2739; it reads SSNNNNNNNINSNNNNNNNNNNNNNNNNNNNNNIYN. 5 consecutive transmembrane segments (helical) span residues 2860–2880, 2905–2925, 3017–3037, 3200–3220, and 3276–3296; these read INLN…CTLT, IMSS…HIYV, YSEI…YHTV, ILIL…YIII, and IIIN…SWIF. Residues 3620–3646 form a disordered region; the sequence is LKNEKSTRTYNSSLQEGSDYDEEEDEE. The span at 3637–3646 shows a compositional bias: acidic residues; it reads SDYDEEEDEE. Positions 3897 to 3925 form a coiled coil; the sequence is KEETIILLKELNSVENDINDLFLEVDLNE.

It belongs to the DOP1 family.

The protein resides in the membrane. Its function is as follows. May be involved in protein traffic between late Golgi and early endosomes. This Plasmodium falciparum (isolate 3D7) protein is Protein DOP1 homolog PFC0245c.